A 468-amino-acid chain; its full sequence is 6-phospho-beta-galactosidase (468 aa).

The D-galactose 6-phosphate site is built by Q19, H116, N159, E160, and N297. The active-site Proton donor is E160. E375 acts as the Nucleophile in catalysis. S428, W429, K435, and Y437 together coordinate D-galactose 6-phosphate.

It belongs to the glycosyl hydrolase 1 family.

It catalyses the reaction a 6-phospho-beta-D-galactoside + H2O = D-galactose 6-phosphate + an alcohol. It participates in carbohydrate metabolism; lactose degradation; D-galactose 6-phosphate and beta-D-glucose from lactose 6-phosphate: step 1/1. This Lactococcus lactis subsp. lactis (Streptococcus lactis) protein is 6-phospho-beta-galactosidase.